A 295-amino-acid chain; its full sequence is Pyridoxal 5'-phosphate synthase subunit PdxS (295 aa).

Asp-25 contributes to the D-ribose 5-phosphate binding site. The active-site Schiff-base intermediate with D-ribose 5-phosphate is Lys-82. Gly-154 serves as a coordination point for D-ribose 5-phosphate. Arg-166 is a D-glyceraldehyde 3-phosphate binding site. D-ribose 5-phosphate-binding positions include Gly-215 and 236-237 (GS).

This sequence belongs to the PdxS/SNZ family. In terms of assembly, in the presence of PdxT, forms a dodecamer of heterodimers.

The enzyme catalyses aldehydo-D-ribose 5-phosphate + D-glyceraldehyde 3-phosphate + L-glutamine = pyridoxal 5'-phosphate + L-glutamate + phosphate + 3 H2O + H(+). The protein operates within cofactor biosynthesis; pyridoxal 5'-phosphate biosynthesis. Catalyzes the formation of pyridoxal 5'-phosphate from ribose 5-phosphate (RBP), glyceraldehyde 3-phosphate (G3P) and ammonia. The ammonia is provided by the PdxT subunit. Can also use ribulose 5-phosphate and dihydroxyacetone phosphate as substrates, resulting from enzyme-catalyzed isomerization of RBP and G3P, respectively. The sequence is that of Pyridoxal 5'-phosphate synthase subunit PdxS from Bacillus cereus (strain B4264).